A 512-amino-acid chain; its full sequence is Cercosporin MFS transporter CTB4 (512 aa).

The next 12 membrane-spanning stretches (helical) occupy residues 72–92 (WVITMSLALYALSTTFSSSVF), 110–130 (VVLGCTSLFMVGFATGPIFWG), 142–162 (LLAGYLGFAVLQLPIADARSL), 170–190 (FLGGFFGAAPSSILSGILADI), 202–222 (TVGAFLTIGPILGPLIGSVLV), 230–250 (WIANVVAIASFLIALSTFPFL), 306–326 (ILLMMTLYVSVSFGLLYNFFL), 343–363 (ASLPLISILVGAIIAGALLSF), 383–403 (LLLMMVGAVSLPAGMFLFAWT), 407–427 (TMNPWPQILSGIPTGFGIHLI), 456–476 (LFAAGFPILATSMYAAIGVKW), and 480–500 (ILALLAVAMIPIPILFYYFGA).

It belongs to the major facilitator superfamily. CAR1 family.

It is found in the cell membrane. Its function is as follows. MFS transporter; part of the gene cluster that mediates the biosynthesis of cercosporin, a light-activated, non-host-selective toxin. The perylenequinone chromophore of cercosporin absorbs light energy to attain an electronically-activated triplet state and produces active oxygen species such as the hydroxyl radical, superoxide, hydrogen peroxide or singlet oxygen upon reaction with oxygen molecules. These reactive oxygen species cause damage to various cellular components including lipids, proteins and nucleic acids. Responsible for secretion and accumulation of cercosporin, but does not play any roles in self-protection against the toxicity of cercosporin. The sequence is that of Cercosporin MFS transporter CTB4 from Cercospora nicotianae (Barn spot disease fungus).